The chain runs to 102 residues: Small ribosomal subunit protein uS10 (102 aa).

It belongs to the universal ribosomal protein uS10 family. Part of the 30S ribosomal subunit.

Involved in the binding of tRNA to the ribosomes. The chain is Small ribosomal subunit protein uS10 from Methylobacterium radiotolerans (strain ATCC 27329 / DSM 1819 / JCM 2831 / NBRC 15690 / NCIMB 10815 / 0-1).